Consider the following 470-residue polypeptide: Macrophage metalloelastase (470 aa).

Residues methionine 1–alanine 16 form the signal peptide. Positions leucine 17 to glycine 105 are cleaved as a propeptide — activation peptide. Asparagine 20 carries an N-linked (GlcNAc...) asparagine glycan. The Cysteine switch motif lies at proline 90 to valine 97. Cysteine 92 contacts Zn(2+). The Ca(2+) site is built by aspartate 124 and aspartate 158. Residues histidine 168 and aspartate 170 each contribute to the Zn(2+) site. Aspartate 175, glycine 176, glycine 178, and isoleucine 180 together coordinate Ca(2+). Histidine 183 serves as a coordination point for Zn(2+). Residues glycine 190, glycine 192, and aspartate 194 each contribute to the Ca(2+) site. Position 196 (histidine 196) interacts with Zn(2+). Aspartate 198, glutamate 199, and glutamate 201 together coordinate Ca(2+). Histidine 218 serves as a coordination point for Zn(2+). Glutamate 219 is a catalytic residue. Zn(2+) contacts are provided by histidine 222 and histidine 228. Hemopexin repeat units follow at residues proline 279 to leucine 328, proline 329 to asparagine 375, valine 377 to isoleucine 425, and glycine 426 to cysteine 470. An intrachain disulfide couples cysteine 282 to cysteine 470. Asparagine 285 carries an N-linked (GlcNAc...) asparagine glycan. Aspartate 289, glutamate 333, aspartate 381, and aspartate 430 together coordinate Ca(2+).

It belongs to the peptidase M10A family. Ca(2+) serves as cofactor. The cofactor is Zn(2+). Found in alveolar macrophages but not in peripheral blood monocytes.

Its subcellular location is the secreted. It localises to the extracellular space. The protein localises to the extracellular matrix. It catalyses the reaction Hydrolysis of soluble and insoluble elastin. Specific cleavages are also produced at 14-Ala-|-Leu-15 and 16-Tyr-|-Leu-17 in the B chain of insulin.. May be involved in tissue injury and remodeling. Has significant elastolytic activity. Can accept large and small amino acids at the P1' site, but has a preference for leucine. Aromatic or hydrophobic residues are preferred at the P1 site, with small hydrophobic residues (preferably alanine) occupying P3. The polypeptide is Macrophage metalloelastase (MMP12) (Homo sapiens (Human)).